The primary structure comprises 767 residues: Phosphoribosylformylglycinamidine synthase subunit PurL (767 aa).

H65 is a catalytic residue. Residues Y68 and K112 each contribute to the ATP site. E114 contributes to the Mg(2+) binding site. Substrate contacts are provided by residues 115–118 (SHNH) and R137. H116 (proton acceptor) is an active-site residue. D138 is a binding site for Mg(2+). Residue Q262 participates in substrate binding. D290 lines the Mg(2+) pocket. Residue 334 to 336 (ESQ) participates in substrate binding. Residues D522 and G559 each contribute to the ATP site. N560 is a Mg(2+) binding site. S562 provides a ligand contact to substrate.

The protein belongs to the FGAMS family. As to quaternary structure, monomer. Part of the FGAM synthase complex composed of 1 PurL, 1 PurQ and 2 PurS subunits.

It is found in the cytoplasm. The enzyme catalyses N(2)-formyl-N(1)-(5-phospho-beta-D-ribosyl)glycinamide + L-glutamine + ATP + H2O = 2-formamido-N(1)-(5-O-phospho-beta-D-ribosyl)acetamidine + L-glutamate + ADP + phosphate + H(+). The protein operates within purine metabolism; IMP biosynthesis via de novo pathway; 5-amino-1-(5-phospho-D-ribosyl)imidazole from N(2)-formyl-N(1)-(5-phospho-D-ribosyl)glycinamide: step 1/2. Part of the phosphoribosylformylglycinamidine synthase complex involved in the purines biosynthetic pathway. Catalyzes the ATP-dependent conversion of formylglycinamide ribonucleotide (FGAR) and glutamine to yield formylglycinamidine ribonucleotide (FGAM) and glutamate. The FGAM synthase complex is composed of three subunits. PurQ produces an ammonia molecule by converting glutamine to glutamate. PurL transfers the ammonia molecule to FGAR to form FGAM in an ATP-dependent manner. PurS interacts with PurQ and PurL and is thought to assist in the transfer of the ammonia molecule from PurQ to PurL. This Renibacterium salmoninarum (strain ATCC 33209 / DSM 20767 / JCM 11484 / NBRC 15589 / NCIMB 2235) protein is Phosphoribosylformylglycinamidine synthase subunit PurL.